A 170-amino-acid polypeptide reads, in one-letter code: Adenine phosphoribosyltransferase (170 aa).

It belongs to the purine/pyrimidine phosphoribosyltransferase family. Homodimer.

It is found in the cytoplasm. The catalysed reaction is AMP + diphosphate = 5-phospho-alpha-D-ribose 1-diphosphate + adenine. It participates in purine metabolism; AMP biosynthesis via salvage pathway; AMP from adenine: step 1/1. Its function is as follows. Catalyzes a salvage reaction resulting in the formation of AMP, that is energically less costly than de novo synthesis. The protein is Adenine phosphoribosyltransferase of Maridesulfovibrio salexigens (strain ATCC 14822 / DSM 2638 / NCIMB 8403 / VKM B-1763) (Desulfovibrio salexigens).